A 343-amino-acid polypeptide reads, in one-letter code: Endoplasmic reticulum-resident calcium binding protein (343 aa).

Positions 1-26 (MMKINLYKLLCFICVIFLLHKNVVRS) are cleaved as a signal peptide. 5 consecutive EF-hand domains span residues 59 to 94 (GAKE…LKNE), 95 to 130 (IFLK…NLDA), 135 to 170 (KHSE…MKDE), 172 to 207 (LKEL…ESSG), and 210 to 245 (KDDE…PAHE). The Ca(2+) site is built by Asp-72, Asn-74, Asp-76, Glu-78, Glu-83, Asp-108, Asp-110, Asp-112, Glu-119, Asp-148, Asp-150, Asp-152, Lys-154, Glu-159, Asp-185, Asn-187, Asp-189, Lys-191, Glu-196, Asp-223, Asn-225, Asp-227, and Glu-234. Positions 313-331 (EDDDMDADNTEDDKDEADD) are enriched in acidic residues. Residues 313 to 343 (EDDDMDADNTEDDKDEADDASQQKSPAIDEL) form a disordered region.

This sequence belongs to the CREC family.

It localises to the endoplasmic reticulum. Its function is as follows. Calcium-binding protein. Required for schizont to ring transition. Required for the breakdown of the parasitophorous vacuole membrane during egress. Required for the proteolytic maturation of apical membrane antigen 1 (AMA-1) during egress. Required for the proteolytic maturation of subtilisin-like protease 1 (SUB1) during egress. Required for the proteolytic maturation of plasmepsin X (PMX) during egress. The protein is Endoplasmic reticulum-resident calcium binding protein of Plasmodium falciparum (isolate 3D7).